Consider the following 182-residue polypeptide: ATP synthase subunit delta (182 aa).

It belongs to the ATPase delta chain family. In terms of assembly, F-type ATPases have 2 components, F(1) - the catalytic core - and F(0) - the membrane proton channel. F(1) has five subunits: alpha(3), beta(3), gamma(1), delta(1), epsilon(1). CF(0) has four main subunits: a(1), b(1), b'(1) and c(10-14). The alpha and beta chains form an alternating ring which encloses part of the gamma chain. F(1) is attached to F(0) by a central stalk formed by the gamma and epsilon chains, while a peripheral stalk is formed by the delta, b and b' chains.

The protein resides in the cellular thylakoid membrane. Its function is as follows. F(1)F(0) ATP synthase produces ATP from ADP in the presence of a proton or sodium gradient. F-type ATPases consist of two structural domains, F(1) containing the extramembraneous catalytic core and F(0) containing the membrane proton channel, linked together by a central stalk and a peripheral stalk. During catalysis, ATP synthesis in the catalytic domain of F(1) is coupled via a rotary mechanism of the central stalk subunits to proton translocation. This protein is part of the stalk that links CF(0) to CF(1). It either transmits conformational changes from CF(0) to CF(1) or is implicated in proton conduction. This is ATP synthase subunit delta from Synechococcus sp. (strain CC9605).